A 570-amino-acid polypeptide reads, in one-letter code: Potassium-transporting ATPase potassium-binding subunit (570 aa).

11 helical membrane-spanning segments follow: residues 7–27 (AEIA…GVFL), 65–85 (AYAL…YAVL), 95–115 (PQGF…SFIT), 135–155 (LVLT…AAAL), 179–199 (LYLL…LGLP), 254–274 (LTNL…FFAF), 286–306 (ALVI…YATE), 383–403 (GVAI…LMVG), 422–442 (ILAV…AAVL), 489–509 (LGIA…AIAG), and 528–548 (GGLF…LQFF).

This sequence belongs to the KdpA family. In terms of assembly, the system is composed of three essential subunits: KdpA, KdpB and KdpC.

The protein localises to the cell inner membrane. Its function is as follows. Part of the high-affinity ATP-driven potassium transport (or Kdp) system, which catalyzes the hydrolysis of ATP coupled with the electrogenic transport of potassium into the cytoplasm. This subunit binds the periplasmic potassium ions and delivers the ions to the membrane domain of KdpB through an intramembrane tunnel. This is Potassium-transporting ATPase potassium-binding subunit from Caulobacter vibrioides (strain ATCC 19089 / CIP 103742 / CB 15) (Caulobacter crescentus).